The following is a 547-amino-acid chain: (E)-beta-caryophyllene synthase (547 aa).

Positions 302 and 306 each coordinate Mg(2+). Substrate is bound by residues aspartate 302, aspartate 306, arginine 443, and asparagine 446. Residues 302–306 (DDLYD) carry the DDXXD motif motif. Mg(2+) contacts are provided by asparagine 446 and glutamate 454.

The protein belongs to the terpene synthase family. Monomer. It depends on Mg(2+) as a cofactor. Mn(2+) is required as a cofactor.

It localises to the cytoplasm. The enzyme catalyses (2E,6E)-farnesyl diphosphate = (-)-(E)-beta-caryophyllene + diphosphate. It participates in secondary metabolite biosynthesis; terpenoid biosynthesis. Functionally, component of the volatile terpenes biosynthesis pathways. Sesquiterpene synthase that converts farnesyl diphosphate to (E)-beta-caryophyllene. Involved in indirect defense by producing volatile signals attracting natural enemies of herbivores. The polypeptide is (E)-beta-caryophyllene synthase (Zea mays (Maize)).